The following is a 700-amino-acid chain: Elongation factor G (700 aa).

The tr-type G domain occupies 8-290 (ERYRNIGISA…GVIDFMPSPI (283 aa)). GTP-binding positions include 17 to 24 (AHIDAGKT), 88 to 92 (DTPGH), and 142 to 145 (NKMD).

Belongs to the TRAFAC class translation factor GTPase superfamily. Classic translation factor GTPase family. EF-G/EF-2 subfamily.

Its subcellular location is the cytoplasm. Functionally, catalyzes the GTP-dependent ribosomal translocation step during translation elongation. During this step, the ribosome changes from the pre-translocational (PRE) to the post-translocational (POST) state as the newly formed A-site-bound peptidyl-tRNA and P-site-bound deacylated tRNA move to the P and E sites, respectively. Catalyzes the coordinated movement of the two tRNA molecules, the mRNA and conformational changes in the ribosome. The polypeptide is Elongation factor G (Methylibium petroleiphilum (strain ATCC BAA-1232 / LMG 22953 / PM1)).